Here is an 82-residue protein sequence, read N- to C-terminus: uncharacterized protein (82 aa).

To M.thermoautotrophicum MTH386.

This is an uncharacterized protein from Methanocaldococcus jannaschii (strain ATCC 43067 / DSM 2661 / JAL-1 / JCM 10045 / NBRC 100440) (Methanococcus jannaschii).